A 290-amino-acid chain; its full sequence is MRFDEAYSGKVFIKSHPSFEESEVVIYGMPMDWTVSYRPGSRFGPARIREVSIGLEEYSPYLDRELEEVKYFDAGDIPLPFGNAQRSLDMIEEYVSKLLDAGKFPLGLGGEHLVSWPIFKAMAKKYPDLAIIHMDAHTDLRESYEGEPLSHSTPIRKVCDLIGPENVYSFGIRSGMKEEFEWAKEVGMNLYKFDVLEPLKEVLPKLEGRPVYVTIDIDVLDPAHAPGTGTLEAGGITSKELLDSIVAIANSNINVVGADLVEVAPVYDHSDQTPVAASKFVREMLLGWVK.

His-112, Asp-135, His-137, Asp-139, Asp-216, and Asp-218 together coordinate Mn(2+).

This sequence belongs to the arginase family. Agmatinase subfamily. The cofactor is Mn(2+).

It catalyses the reaction agmatine + H2O = urea + putrescine. It participates in amine and polyamine biosynthesis; putrescine biosynthesis via agmatine pathway; putrescine from agmatine: step 1/1. Functionally, catalyzes the formation of putrescine from agmatine. This is Agmatinase (speB) from Bacillus anthracis.